A 667-amino-acid chain; its full sequence is MAAAAPSPSSSAFSKTLSPSSSTSSTLLPRSTFPFPHHPHKTTPPPLHLTHTHIHIHSQRRRFTISNVISTNQKVSQTEKTETFVSRFAPDEPRKGSDVLVEALEREGVTDVFAYPGGASMEIHQALTRSSIIRNVLPRHEQGGVFAAEGYARATGFPGVCIATSGPGATNLVSGLADALLDSVPIVAITGQVPRRMIGTDAFQETPIVEVTRSITKHNYLVMDVEDIPRVVREAFFLARSGRPGPILIDVPKDIQQQLVIPDWDQPMRLPGYMSRLPKLPNEMLLEQIVRLISESKKPVLYVGGGCSQSSEDLRRFVELTGIPVASTLMGLGAFPTGDELSLSMLGMHGTVYANYAVDSSDLLLAFGVRFDDRVTGKLEAFASRAKIVHIDIDSAEIGKNKQPHVSICADIKLALQGLNSILESKEGKLKLDFSAWRQELTEQKVKHPLNFKTFGDAIPPQYAIQVLDELTNGNAIISTGVGQHQMWAAQYYKYRKPRQWLTSGGLGAMGFGLPAAIGAAVGRPDEVVVDIDGDGSFIMNVQELATIKVENLPVKIMLLNNQHLGMVVQWEDRFYKANRAHTYLGNPSNEAEIFPNMLKFAEACGVPAARVTHRDDLRAAIQKMLDTPGPYLLDVIVPHQEHVLPMIPSGGAFKDVITEGDGRSSY.

Over residues 1 to 35 (MAAAAPSPSSSAFSKTLSPSSSTSSTLLPRSTFPF) the composition is skewed to low complexity. The disordered stretch occupies residues 1 to 45 (MAAAAPSPSSSAFSKTLSPSSSTSSTLLPRSTFPFPHHPHKTTPP). The transit peptide at 1-94 (MAAAAPSPSS…VSRFAPDEPR (94 aa)) directs the protein to the chloroplast. A thiamine diphosphate-binding site is contributed by Glu141. Residues Cys161 and Cys307 are joined by a disulfide bond. FAD-binding positions include Arg243, 349–370 (HGTVYANYAVDSSDLLLAFGVR), and 392–411 (DIDSAEIGKNKQPHVSICAD). A thiamine pyrophosphate binding region spans residues 484–564 (QHQMWAAQYY…VKIMLLNNQH (81 aa)). The Mg(2+) site is built by Asp535 and Asn562.

It belongs to the TPP enzyme family. Mg(2+) is required as a cofactor. It depends on thiamine diphosphate as a cofactor.

The protein resides in the plastid. It localises to the chloroplast. It carries out the reaction 2 pyruvate + H(+) = (2S)-2-acetolactate + CO2. It functions in the pathway amino-acid biosynthesis; L-isoleucine biosynthesis; L-isoleucine from 2-oxobutanoate: step 1/4. Its pathway is amino-acid biosynthesis; L-valine biosynthesis; L-valine from pyruvate: step 1/4. The chain is Acetolactate synthase 1, chloroplastic (ALS SURA) from Nicotiana tabacum (Common tobacco).